Consider the following 133-residue polypeptide: uncharacterized protein (133 aa).

The FAS1 domain occupies 1–130 (MPNIVEIAVS…GIIHVIDNVI (130 aa)).

This is an uncharacterized protein from Synechocystis sp. (strain ATCC 27184 / PCC 6803 / Kazusa).